The chain runs to 338 residues: 1-aminocyclopropane-1-carboxylate deaminase (338 aa).

Position 51 is an N6-(pyridoxal phosphate)lysine (Lys51). The Nucleophile role is filled by Ser78.

The protein belongs to the ACC deaminase/D-cysteine desulfhydrase family. In terms of assembly, homotrimer. The cofactor is pyridoxal 5'-phosphate.

It carries out the reaction 1-aminocyclopropane-1-carboxylate + H2O = 2-oxobutanoate + NH4(+). In terms of biological role, catalyzes a cyclopropane ring-opening reaction, the irreversible conversion of 1-aminocyclopropane-1-carboxylate (ACC) to ammonia and alpha-ketobutyrate. Allows growth on ACC as a nitrogen source. In Burkholderia multivorans (strain ATCC 17616 / 249), this protein is 1-aminocyclopropane-1-carboxylate deaminase.